A 317-amino-acid chain; its full sequence is MAKNPPENCEGCHILNAEALKSKKICKSLKICGLVFGILALTLIVLFWGSKHFWPEVSKKTYDMEHTFYSNGEKKKIYMEIDPITRTEIFRSGNGTDETLEVHDFKNGYTGIYFVGLQKCFIKTQIKVIPEFSEPEEEIDENEEITTTFFEQSVIWVPAEKPIENRDFLKNSKILEICDNVTMYWINPTLIAVSELQDFEEDGEDLHFPTSEKKGIDQNEQWVVPQVKVEKTRHTRQASEEDLPINDYTENGIEFDPMLDERGYCCIYCRRGNRYCRRVCEPLLGYYPYPYCYQGGRVICRVIMPCNWWVARMLGRV.

Residues Met-1–Lys-30 are Cytoplasmic-facing. The chain crosses the membrane as a helical; Signal-anchor for type II membrane protein span at residues Ile-31–Ser-50. The Extracellular portion of the chain corresponds to Lys-51–Val-317. Positions Gly-93 to Ile-186 constitute a BRICHOS domain. An N-linked (GlcNAc...) asparagine glycan is attached at Asn-94. Cys-120 and Cys-178 are disulfide-bonded. N-linked (GlcNAc...) asparagine glycosylation occurs at Asn-180. Residue Ser-239 is modified to Phosphoserine.

It belongs to the chondromodulin-1 family. Widely expressed with highest expression in tendons and ligaments, in the diaphragm, eye and skeletal muscle. Expressed in neuronal cells of all brain regions. Very low expression, if any, in glial cells.

Its subcellular location is the membrane. The protein localises to the nucleus envelope. In terms of biological role, may be an angiogenesis inhibitor. This is Tenomodulin (Tnmd) from Mus musculus (Mouse).